The following is a 199-amino-acid chain: Protein-methionine-sulfoxide reductase heme-binding subunit MsrQ (199 aa).

5 helical membrane passes run 8 to 28 (ITWL…WLFW), 82 to 102 (LWCF…ELGI), 116 to 136 (PYLT…LTST), 149 to 169 (FLHN…LWSV), and 171 to 191 (ILSP…AWRY).

The protein belongs to the MsrQ family. In terms of assembly, heterodimer of a catalytic subunit (MsrP) and a heme-binding subunit (MsrQ). FMN serves as cofactor. The cofactor is heme b.

The protein resides in the cell inner membrane. Functionally, part of the MsrPQ system that repairs oxidized periplasmic proteins containing methionine sulfoxide residues (Met-O), using respiratory chain electrons. Thus protects these proteins from oxidative-stress damage caused by reactive species of oxygen and chlorine generated by the host defense mechanisms. MsrPQ is essential for the maintenance of envelope integrity under bleach stress, rescuing a wide series of structurally unrelated periplasmic proteins from methionine oxidation. MsrQ provides electrons for reduction to the reductase catalytic subunit MsrP, using the quinone pool of the respiratory chain. The protein is Protein-methionine-sulfoxide reductase heme-binding subunit MsrQ of Enterobacter sp. (strain 638).